The primary structure comprises 475 residues: Ribulose bisphosphate carboxylase large chain (475 aa).

Positions 1-2 (MS) are excised as a propeptide. Proline 3 carries the post-translational modification N-acetylproline. Lysine 14 bears the N6,N6,N6-trimethyllysine mark. Substrate is bound by residues asparagine 123 and threonine 173. Lysine 175 functions as the Proton acceptor in the catalytic mechanism. Lysine 177 is a substrate binding site. Mg(2+) is bound by residues lysine 201, aspartate 203, and glutamate 204. N6-carboxylysine is present on lysine 201. Histidine 294 functions as the Proton acceptor in the catalytic mechanism. Substrate contacts are provided by arginine 295, histidine 327, and serine 379.

This sequence belongs to the RuBisCO large chain family. Type I subfamily. As to quaternary structure, heterohexadecamer of 8 large chains and 8 small chains; disulfide-linked. The disulfide link is formed within the large subunit homodimers. It depends on Mg(2+) as a cofactor. The disulfide bond which can form in the large chain dimeric partners within the hexadecamer appears to be associated with oxidative stress and protein turnover.

The protein localises to the plastid. It localises to the chloroplast. The enzyme catalyses 2 (2R)-3-phosphoglycerate + 2 H(+) = D-ribulose 1,5-bisphosphate + CO2 + H2O. It carries out the reaction D-ribulose 1,5-bisphosphate + O2 = 2-phosphoglycolate + (2R)-3-phosphoglycerate + 2 H(+). Its function is as follows. RuBisCO catalyzes two reactions: the carboxylation of D-ribulose 1,5-bisphosphate, the primary event in carbon dioxide fixation, as well as the oxidative fragmentation of the pentose substrate in the photorespiration process. Both reactions occur simultaneously and in competition at the same active site. This is Ribulose bisphosphate carboxylase large chain from Zygnema circumcarinatum (Green alga).